A 37-amino-acid polypeptide reads, in one-letter code: Large ribosomal subunit protein bL36 (37 aa).

The protein belongs to the bacterial ribosomal protein bL36 family.

This Aliarcobacter butzleri (strain RM4018) (Arcobacter butzleri) protein is Large ribosomal subunit protein bL36.